A 90-amino-acid polypeptide reads, in one-letter code: Small ribosomal subunit protein uS15 (90 aa).

It belongs to the universal ribosomal protein uS15 family. As to quaternary structure, part of the 30S ribosomal subunit. Forms a bridge to the 50S subunit in the 70S ribosome, contacting the 23S rRNA.

In terms of biological role, one of the primary rRNA binding proteins, it binds directly to 16S rRNA where it helps nucleate assembly of the platform of the 30S subunit by binding and bridging several RNA helices of the 16S rRNA. Its function is as follows. Forms an intersubunit bridge (bridge B4) with the 23S rRNA of the 50S subunit in the ribosome. The chain is Small ribosomal subunit protein uS15 from Campylobacter jejuni subsp. doylei (strain ATCC BAA-1458 / RM4099 / 269.97).